The chain runs to 367 residues: DNA-directed RNA polymerase II subunit GRINL1A (367 aa).

The stretch at 15-40 forms a coiled coil; it reads DLERRSLAELREMLKRQERLLRNEKF. The interval 29–68 is important for transcription repressor activity; the sequence is KRQERLLRNEKFICKLPDKGKKIFDSFAKLKAAIAECEEV. Polar residues-rich tracts occupy residues 117–131, 176–185, and 205–225; these read SVDNIKSSQTSQNQG, RVSSQAEDTS, and GEQQSENASTKNLTGLSSGTQ. 3 disordered regions span residues 117–185, 203–225, and 254–281; these read SVDN…EDTS, DQGEQQSENASTKNLTGLSSGTQ, and PFRQNDSSSHCQKSRSPISSEERRRRDK. Positions 226–297 are interaction with Pol II; sequence KKPHYMEVLE…TAARLLPLHH (72 aa). Serine 269 carries the phosphoserine modification. The interval 298–313 is important for transcription repressor activity; the sequence is MPTQLLSIEESLALQK. Residues 300 to 329 are a coiled coil; the sequence is TQLLSIEESLALQKQRKQKYEEMQAKLAAQ. The segment at 314–339 is interaction with Pol II; the sequence is QRKQKYEEMQAKLAAQKLAERLNIKM. Residues 335-367 are disordered; the sequence is LNIKMRSYNPEGESSGRYREVRDEDDDWSSDEF. The span at 357-367 shows a compositional bias: acidic residues; the sequence is DEDDDWSSDEF.

It belongs to the GRINL1 family. Component of the Pol II(G) complex, which contains the RNA polymerase II (Pol II) core complex subunits and POLR2M isoform 1. Pol II(G) appears to be an abundant form of Pol II. Dephosphorylated at Ser-269 by the PNUTS-PP1 complex, promoting RNA polymerase II transcription pause-release.

It is found in the nucleus. Its function is as follows. Appears to be a stable component of the Pol II(G) complex form of RNA polymerase II (Pol II). Pol II synthesizes mRNA precursors and many functional non-coding RNAs and is the central component of the basal RNA polymerase II transcription machinery. May play a role in the Mediator complex-dependent regulation of transcription activation. Acts as a negative regulator of transcriptional activation; this repression is relieved by the Mediator complex, which restores Pol II(G) activator-dependent transcription to a level equivalent to that of Pol II. The protein is DNA-directed RNA polymerase II subunit GRINL1A (POLR2M) of Pongo abelii (Sumatran orangutan).